A 355-amino-acid chain; its full sequence is tRNA (guanine-N(1)-)-methyltransferase (355 aa).

S-adenosyl-L-methionine contacts are provided by residues glycine 109 and 129 to 134; that span reads IGDYVL.

Belongs to the RNA methyltransferase TrmD family. Homodimer.

The protein localises to the cytoplasm. It carries out the reaction guanosine(37) in tRNA + S-adenosyl-L-methionine = N(1)-methylguanosine(37) in tRNA + S-adenosyl-L-homocysteine + H(+). Functionally, specifically methylates guanosine-37 in various tRNAs. The polypeptide is tRNA (guanine-N(1)-)-methyltransferase (Chlamydia caviae (strain ATCC VR-813 / DSM 19441 / 03DC25 / GPIC) (Chlamydophila caviae)).